The chain runs to 558 residues: ATP synthase subunit alpha (558 aa).

172 to 179 (GDRKTGKT) is a binding site for ATP. The disordered stretch occupies residues 536 to 558 (ESVKVHQAIPAKTSEKSKNSTPR). The segment covering 548-558 (TSEKSKNSTPR) has biased composition (basic and acidic residues).

It belongs to the ATPase alpha/beta chains family. In terms of assembly, F-type ATPases have 2 components, CF(1) - the catalytic core - and CF(0) - the membrane proton channel. CF(1) has five subunits: alpha(3), beta(3), gamma(1), delta(1), epsilon(1). CF(0) has three main subunits: a(1), b(2) and c(9-12). The alpha and beta chains form an alternating ring which encloses part of the gamma chain. CF(1) is attached to CF(0) by a central stalk formed by the gamma and epsilon chains, while a peripheral stalk is formed by the delta and b chains.

The protein resides in the cell membrane. It catalyses the reaction ATP + H2O + 4 H(+)(in) = ADP + phosphate + 5 H(+)(out). Functionally, produces ATP from ADP in the presence of a proton gradient across the membrane. The alpha chain is a regulatory subunit. This is ATP synthase subunit alpha from Mycobacterium leprae (strain Br4923).